We begin with the raw amino-acid sequence, 1262 residues long: MVQQVPENISFPAEEEKILEFWSKHNCFQECLKQSKLRPKFTFYDGPPFATGLPHYGHILAGTIKDIVTRYAHQSGFHVDRRFGWDCHGLPVEYEIDKTLGIKGPEDVAKMGIAEYNKQCRAIVMRYSAEWKSTVTRLGRWIDFDNDYKTLYPQFMESVWWVFKQLYDKGLVYRGVKVMPFSTACGTPLSNFESNQNYKDVQDPSVFVTFPLEEDENTSLVAWTTTPWTLPSNLALCVNPEIQYVKIKDVARGKLFILTEARLSALYKQESDYEILERFPGASLKGKKYKPLFDYFIKCKENGAFTVLVDHYVKDEEGTGVVHQAPYFGADDHRVCMDFNIIQKDSVPVCPVDASGCFTEEVTHFVGQYVKDADKNIIRMLKEQGRLLAAGTFTHSYPFCWRSDTPLIYKSVPSWFVRVEPMVDQLLKNNDLCYWVPEFVREKRFGNWLKEARDWAISRNRYWGTPIPLWVSEDLEEVVCIGSVAELEELSGTKISDLHRESIDHLTIPSRCGKAPLRRVSEVFDCWFESGSMPYAQVHYPFESKREFEDAFPADFIAEGIDQTRGWFYTLLVLATALFGQPPFKNVIVNGLILASDGQKMSKRKKNYPDPVSIIDKYGADALRLYLINSPVVRAENLRFKEEGVRDVLKDVLLPWYNAYRFFIQNVFRLHKEEEVKFLYNEHTVRESPNITDRWVLSFMQSLLGFFETEMAAYRLYTVVPRLVKFVDILTNWYVRMNRRRLKGESGVEDCVMALETLFSVLLSLCRLMAPYTPFLTELMYQNLKLLIDPASLRDKDTLSIHYLMLPRVREELIDKKTENAVSRMQSVIELGRVIRDRKTIPIKYPLKEIVVIHQDPEALEDIRSLEKYIIEELNVRKVTLSTDKNKYGIRLRAEPDHMVLGKRLKGAFKAVMMAIKRLSNEELERFQKSGSIVVEGHELHEEDIRLMYTFDQATGGTAQFEAHSDAQALVLLDVTPDQSMVDEGMAREVINRIQKLRKKCNLVPTDEITVYYNAKSEGRYLNNVIESHTDFIFATIKAPLKPYPVPTSDNILIQEQTQLKGSELEITLTKGSCVPGPACAYVNLNICANGTEQGGVLLLENPKGDNQLNLVKLKTVVTSVFGVKNAKLSVFHGETEIQNQTDLLSLSGRTLCVTAGASPSPISSPSTLLCQYLNLQLLNAEPQECLTGTVGTLLLENPLGQNGLTHQGLVHEAAKVFGLRSRRLRLFLNETQTQEITEDIPMKTLNMKTVYVSVLPTTADG.

M1 carries the N-acetylmethionine modification. Positions 48–58 match the 'HIGH' region motif; sequence PFATGLPHYGH. The 'KMSKS' region motif lies at 600 to 604; sequence KMSKR. An ATP-binding site is contributed by K603. The residue at position 1049 (S1049) is a Phosphoserine. Position 1058 is a phosphothreonine (T1058).

Belongs to the class-I aminoacyl-tRNA synthetase family. In terms of assembly, part of a multisubunit complex that groups tRNA ligases for Arg (RARS1), Asp (DARS1), Gln (QARS1), Ile (IARS1), Leu (LARS1), Lys (KARS1), Met (MARS1) the bifunctional ligase for Glu and Pro (EPRS1) and the auxiliary subunits AIMP1/p43, AIMP2/p38 and EEF1E1/p18.

It localises to the cytoplasm. It is found in the cytosol. The enzyme catalyses tRNA(Ile) + L-isoleucine + ATP = L-isoleucyl-tRNA(Ile) + AMP + diphosphate. Catalyzes the specific attachment of an amino acid to its cognate tRNA in a 2 step reaction: the amino acid (AA) is first activated by ATP to form AA-AMP and then transferred to the acceptor end of the tRNA. The polypeptide is Isoleucine--tRNA ligase, cytoplasmic (Iars1) (Mus musculus (Mouse)).